Here is a 244-residue protein sequence, read N- to C-terminus: Large ribosomal subunit protein uL2 (244 aa).

Basic residues predominate over residues 1-12 (MGKRILVQRRGR). Disordered stretches follow at residues 1–26 (MGKR…KRDG) and 193–225 (AMSP…KVGF).

It belongs to the universal ribosomal protein uL2 family. Part of the 50S ribosomal subunit. Forms a bridge to the 30S subunit in the 70S ribosome.

Its function is as follows. One of the primary rRNA binding proteins. Required for association of the 30S and 50S subunits to form the 70S ribosome, for tRNA binding and peptide bond formation. It has been suggested to have peptidyltransferase activity; this is somewhat controversial. Makes several contacts with the 16S rRNA in the 70S ribosome. This Pyrobaculum calidifontis (strain DSM 21063 / JCM 11548 / VA1) protein is Large ribosomal subunit protein uL2.